A 118-amino-acid polypeptide reads, in one-letter code: UPF0148 protein M1627_1409 (118 aa).

It belongs to the UPF0148 family.

This is UPF0148 protein M1627_1409 from Saccharolobus islandicus (strain M.16.27) (Sulfolobus islandicus).